Here is a 547-residue protein sequence, read N- to C-terminus: Elongator complex protein 3 (547 aa).

In terms of domain architecture, Radical SAM core spans 82–372 (RTASGIAVVA…YRVQRDIPMP (291 aa)). Residues cysteine 99, cysteine 109, and cysteine 112 each contribute to the [4Fe-4S] cluster site. Residue serine 161 is modified to Phosphoserine. Lysine 164 is a binding site for acetyl-CoA. Residue tyrosine 202 is modified to Phosphotyrosine. N6-methyllysine is present on lysine 229. Tyrosine 251 carries the post-translational modification Phosphotyrosine. In terms of domain architecture, N-acetyltransferase spans 396-547 (IQCRDVRTRE…QGPYMVKTLE (152 aa)). Residues 474-477 (ELHV), 497-499 (FGM), and tyrosine 530 contribute to the acetyl-CoA site.

Belongs to the ELP3 family. In terms of assembly, component of the elongator complex which consists of ELP1, ELP2, ELP3, ELP4, ELP5 and ELP6. ELP1, ELP2 and ELP3 form the elongator core complex. Interacts with alpha-tubulin. [4Fe-4S] cluster serves as cofactor. In terms of processing, tyrosine-phosphorylated; phosphorylation on Tyr-202 does not affect elongator complex integrity or ELP3 protein stability. Also serine/threonine-phosphorylated.

Its subcellular location is the cytoplasm. It localises to the nucleus. The enzyme catalyses uridine(34) in tRNA + acetyl-CoA + S-adenosyl-L-methionine + H2O = 5-(carboxymethyl)uridine(34) in tRNA + 5'-deoxyadenosine + L-methionine + CoA + 2 H(+). The protein operates within tRNA modification; 5-methoxycarbonylmethyl-2-thiouridine-tRNA biosynthesis. Its function is as follows. Catalytic tRNA acetyltransferase subunit of the elongator complex which is required for multiple tRNA modifications, including mcm5U (5-methoxycarbonylmethyl uridine), mcm5s2U (5-methoxycarbonylmethyl-2-thiouridine), and ncm5U (5-carbamoylmethyl uridine). In the elongator complex, acts as a tRNA uridine(34) acetyltransferase by mediating formation of carboxymethyluridine in the wobble base at position 34 in tRNAs. May also act as a protein lysine acetyltransferase by mediating acetylation of target proteins; such activity is however unclear in vivo and recent evidences suggest that ELP3 primarily acts as a tRNA acetyltransferase. Involved in neurogenesis: regulates the migration and branching of projection neurons in the developing cerebral cortex, through a process depending on alpha-tubulin acetylation. Required for acetylation of GJA1 in the developing cerebral cortex. In Bos taurus (Bovine), this protein is Elongator complex protein 3.